Here is a 693-residue protein sequence, read N- to C-terminus: eEF1A lysine and N-terminal methyltransferase (693 aa).

This sequence belongs to the methyltransferase superfamily.

It catalyses the reaction L-lysyl-[protein] + S-adenosyl-L-methionine = N(6)-methyl-L-lysyl-[protein] + S-adenosyl-L-homocysteine + H(+). It carries out the reaction N(6)-methyl-L-lysyl-[protein] + S-adenosyl-L-methionine = N(6),N(6)-dimethyl-L-lysyl-[protein] + S-adenosyl-L-homocysteine + H(+). The enzyme catalyses N-terminal glycyl-L-lysyl-L-glutamyl-[protein] + 3 S-adenosyl-L-methionine = N-terminal N,N,N-trimethyl-glycyl-L-lysyl-L-glutamyl-[protein] + 3 S-adenosyl-L-homocysteine + 3 H(+). Its function is as follows. Dual methyltransferase that catalyzes methylation of elongation factor 1-alpha (eef1a1 and eef1a2) at two different positions, and is therefore involved in the regulation of mRNA translation. Via its C-terminus, methylates the N-terminus of eef1a1 and eef1a2. Via its N-terminus dimethylates lysine residues of eef1a1 and eef1a2. This chain is eEF1A lysine and N-terminal methyltransferase (mettl13), found in Xenopus laevis (African clawed frog).